A 261-amino-acid polypeptide reads, in one-letter code: Adenosylcobinamide-GDP ribazoletransferase (261 aa).

5 consecutive transmembrane segments (helical) span residues 31–51, 59–79, 125–145, 183–203, and 240–260; these read YAIC…FLTF, LGDI…SGGI, FGMV…FFVV, VIYL…LTVV, and LMAG…TGHW.

It belongs to the CobS family. Requires Mg(2+) as cofactor.

It localises to the cell membrane. It catalyses the reaction alpha-ribazole + adenosylcob(III)inamide-GDP = adenosylcob(III)alamin + GMP + H(+). It carries out the reaction alpha-ribazole 5'-phosphate + adenosylcob(III)inamide-GDP = adenosylcob(III)alamin 5'-phosphate + GMP + H(+). It functions in the pathway cofactor biosynthesis; adenosylcobalamin biosynthesis; adenosylcobalamin from cob(II)yrinate a,c-diamide: step 7/7. Joins adenosylcobinamide-GDP and alpha-ribazole to generate adenosylcobalamin (Ado-cobalamin). Also synthesizes adenosylcobalamin 5'-phosphate from adenosylcobinamide-GDP and alpha-ribazole 5'-phosphate. In Lachnoclostridium phytofermentans (strain ATCC 700394 / DSM 18823 / ISDg) (Clostridium phytofermentans), this protein is Adenosylcobinamide-GDP ribazoletransferase.